The chain runs to 72 residues: Aurein-2.2 (72 aa).

Positions 1-22 (MAFLKKSLFLVLFLGLVSLSIC) are cleaved as a signal peptide. A propeptide spanning residues 23–49 (EKEKRQNEEDEDENEAANHEEGSEEKR) is cleaved from the precursor. The segment at 27–47 (RQNEEDEDENEAANHEEGSEE) is disordered. The segment covering 38-47 (AANHEEGSEE) has biased composition (basic and acidic residues). Position 65 is a leucine amide (leucine 65). Residues 69 to 72 (NDLE) constitute a propeptide that is removed on maturation.

In terms of processing, amidation is essential for antibacterial activity against Gram-positive bacteria. As to expression, expressed by the skin dorsal glands.

The protein resides in the secreted. Its subcellular location is the target cell membrane. Its function is as follows. Amphipathic alpha-helical antimicrobial peptide with weak to moderate activity against Gram-positive bacteria, and no activity against Gram-negative bacteria. Probably acts by disturbing membrane functions with its amphipathic structure. Strongly inhibits the formation of NO by neuronal nitric oxide synthase (nNOS) at micromolar concentrations. Acts by a non-competitive mechanism, probably by binding to calcium/calmodulin and as a consequence blocking calmodulin attachment to nNOS. This is Aurein-2.2 from Ranoidea aurea (Green and golden bell frog).